A 748-amino-acid polypeptide reads, in one-letter code: Photosystem I P700 chlorophyll a apoprotein A1 (748 aa).

Transmembrane regions (helical) follow at residues 70-93 (VFSAHFGQIAVILIWLSGMYFHGA), 156-179 (LYSTAIGGLVLATLTLIGGWYHYH), 195-219 (LNHHLAGLIGLGSLSWAGHQIHVSL), 291-309 (TAHHHLAIAVLFIIAGHQY), 346-369 (WHAQLALNLALFGSLTIIVAHHMY), 385-411 (LSLFTHHMWIGGFLVTGAAAHAAIFLV), 433-455 (AIISHLNWVCIFLGFHSFGLYIH), and 530-548 (FLVHHIHAFTIHVTVLILL). Residues Cys-572 and Cys-581 each coordinate [4Fe-4S] cluster. 2 helical membrane passes run 588–609 (HVFLGLFWMYNSISVVIFHFSW) and 662–684 (LSAYGLIFLGAHFVWAFSLMFLF). His-673 is a binding site for chlorophyll a'. Chlorophyll a-binding residues include Met-681 and Tyr-689. Trp-690 is a binding site for phylloquinone. The chain crosses the membrane as a helical span at residues 722 to 742 (AVGVAHYLLGGIATTWAFFLA).

It belongs to the PsaA/PsaB family. The PsaA/B heterodimer binds the P700 chlorophyll special pair and subsequent electron acceptors. PSI consists of a core antenna complex that captures photons, and an electron transfer chain that converts photonic excitation into a charge separation. The eukaryotic PSI reaction center is composed of at least 11 subunits. Requires P700 is a chlorophyll a/chlorophyll a' dimer, A0 is one or more chlorophyll a, A1 is one or both phylloquinones and FX is a shared 4Fe-4S iron-sulfur center. as cofactor.

Its subcellular location is the plastid. It localises to the chloroplast thylakoid membrane. The enzyme catalyses reduced [plastocyanin] + hnu + oxidized [2Fe-2S]-[ferredoxin] = oxidized [plastocyanin] + reduced [2Fe-2S]-[ferredoxin]. PsaA and PsaB bind P700, the primary electron donor of photosystem I (PSI), as well as the electron acceptors A0, A1 and FX. PSI is a plastocyanin-ferredoxin oxidoreductase, converting photonic excitation into a charge separation, which transfers an electron from the donor P700 chlorophyll pair to the spectroscopically characterized acceptors A0, A1, FX, FA and FB in turn. Oxidized P700 is reduced on the lumenal side of the thylakoid membrane by plastocyanin. The protein is Photosystem I P700 chlorophyll a apoprotein A1 of Chaetosphaeridium globosum (Charophycean green alga).